A 258-amino-acid polypeptide reads, in one-letter code: Hydroxyacylglutathione hydrolase (258 aa).

Positions 52, 54, 56, 57, 109, 126, and 164 each coordinate Zn(2+).

It belongs to the metallo-beta-lactamase superfamily. Glyoxalase II family. Monomer. It depends on Zn(2+) as a cofactor.

The catalysed reaction is an S-(2-hydroxyacyl)glutathione + H2O = a 2-hydroxy carboxylate + glutathione + H(+). The protein operates within secondary metabolite metabolism; methylglyoxal degradation; (R)-lactate from methylglyoxal: step 2/2. Functionally, thiolesterase that catalyzes the hydrolysis of S-D-lactoyl-glutathione to form glutathione and D-lactic acid. The chain is Hydroxyacylglutathione hydrolase from Xylella fastidiosa (strain 9a5c).